We begin with the raw amino-acid sequence, 634 residues long: Chaperone protein HtpG (634 aa).

Residues 1–344 (MNETVANNKE…SNDLPLNVSR (344 aa)) are a; substrate-binding. A b region spans residues 345-561 (EILQDNKVTQ…DFEMGTQMAK (217 aa)). The c stretch occupies residues 562–634 (LLAAAGQAVP…TAINSLLTKG (73 aa)).

Belongs to the heat shock protein 90 family. As to quaternary structure, homodimer.

It localises to the cytoplasm. Molecular chaperone. Has ATPase activity. The chain is Chaperone protein HtpG from Vibrio vulnificus (strain YJ016).